We begin with the raw amino-acid sequence, 442 residues long: Protein trichome birefringence-like 26 (442 aa).

The chain crosses the membrane as a helical; Signal-anchor for type II membrane protein span at residues 51-71; it reads FFLYFSLVALAYYFIISSLAV. The short motif at 164 to 166 is the GDS motif element; it reads GDS. The DCXHWCLPGXXDXWN motif signature appears at 409 to 423; it reads DCLHWCLPGPIDSWN.

This sequence belongs to the PC-esterase family. TBL subfamily.

It localises to the membrane. Its function is as follows. May be involved in the O-acetylation of mannan. May act as a bridging protein that binds pectin and other cell wall polysaccharides. Probably involved in maintaining esterification of pectins. The sequence is that of Protein trichome birefringence-like 26 (TBL26) from Arabidopsis thaliana (Mouse-ear cress).